Reading from the N-terminus, the 471-residue chain is L-amino acid dehydrogenase (471 aa).

Glycine 31 is a Mg(2+) binding site. Serine 33 serves as a coordination point for FAD. Glycine 34 serves as a coordination point for Mg(2+). FAD contacts are provided by glutamate 52, arginine 60, and valine 256. Residue alanine 283 coordinates Mg(2+). Phenylalanine 453 provides a ligand contact to FAD.

Belongs to the flavin monoamine oxidase family. It depends on FAD as a cofactor. Mg(2+) is required as a cofactor.

The protein localises to the cellular thylakoid membrane. The enzyme catalyses a plastoquinone + an L-alpha-amino acid + H2O = a plastoquinol + a 2-oxocarboxylate + NH4(+). The catalysed reaction is a plastoquinone + L-arginine + H2O = a plastoquinol + 5-guanidino-2-oxopentanoate + NH4(+). The protein operates within amino-acid degradation; L-arginine degradation. With respect to regulation, inhibited by Ca(2+) and other cations such as Ni(2+), Co(2+) and Zn(2+). The inhibition by o-phenanthroline and salicylhydroxamic acid suggests the presence of a metal cofactor besides FAD in the enzyme. The L-arginine-stimulated O(2) consumption involving slr0782 is inhibited by inhibitors of the respiratory electron transport chain, such as KCN and 2,5-dibromo-3-methyl-6-isopropyl-p-benzoquinone, which indicates a participation of the cytochrome b6/f complex and of a cytochrome oxidase. Its function is as follows. L-amino acid dehydrogenase with broad substrate specificity. Catalyzes the oxidative deamination of various L-amino acids, L-Arg and L-Cys being the best substrates in vitro. Likely functions mainly as an L-arginine dehydrogenase in vivo. Probably feeds electrons from L-arginine oxidation and also from the oxidation of other L-amino acids into the respiratory electron transport chain associated to the thylakoid membrane, and does not directly interact with molecular oxygen but donates electrons to the plastoquinone pool. Cannot use D-amino acids as substrates. The sequence is that of L-amino acid dehydrogenase from Synechocystis sp. (strain ATCC 27184 / PCC 6803 / Kazusa).